Consider the following 199-residue polypeptide: Acireductone dioxygenase 3 (199 aa).

Fe(2+) contacts are provided by His-99, His-101, Glu-105, and His-144. Positions 99, 101, 105, and 144 each coordinate Ni(2+).

Belongs to the acireductone dioxygenase (ARD) family. The cofactor is Fe(2+). Requires Ni(2+) as cofactor.

It localises to the cytoplasm. The protein resides in the nucleus. The catalysed reaction is 1,2-dihydroxy-5-(methylsulfanyl)pent-1-en-3-one + O2 = 4-methylsulfanyl-2-oxobutanoate + formate + 2 H(+). It carries out the reaction 1,2-dihydroxy-5-(methylsulfanyl)pent-1-en-3-one + O2 = 3-(methylsulfanyl)propanoate + CO + formate + 2 H(+). It functions in the pathway amino-acid biosynthesis; L-methionine biosynthesis via salvage pathway; L-methionine from S-methyl-5-thio-alpha-D-ribose 1-phosphate: step 5/6. In terms of biological role, catalyzes 2 different reactions between oxygen and the acireductone 1,2-dihydroxy-3-keto-5-methylthiopentene (DHK-MTPene) depending upon the metal bound in the active site. Fe-containing acireductone dioxygenase (Fe-ARD) produces formate and 2-keto-4-methylthiobutyrate (KMTB), the alpha-ketoacid precursor of methionine in the methionine recycle pathway. Ni-containing acireductone dioxygenase (Ni-ARD) produces methylthiopropionate, carbon monoxide and formate, and does not lie on the methionine recycle pathway. This Arabidopsis thaliana (Mouse-ear cress) protein is Acireductone dioxygenase 3 (ARD3).